The primary structure comprises 144 residues: Large ribosomal subunit protein uL11 (144 aa).

This sequence belongs to the universal ribosomal protein uL11 family. In terms of assembly, part of the ribosomal stalk of the 50S ribosomal subunit. Interacts with L10 and the large rRNA to form the base of the stalk. L10 forms an elongated spine to which L12 dimers bind in a sequential fashion forming a multimeric L10(L12)X complex. Post-translationally, one or more lysine residues are methylated.

Its function is as follows. Forms part of the ribosomal stalk which helps the ribosome interact with GTP-bound translation factors. The sequence is that of Large ribosomal subunit protein uL11 from Rhodococcus erythropolis (strain PR4 / NBRC 100887).